The sequence spans 681 residues: Cobalamin-dependent radical SAM methyltransferase TokK (681 aa).

The B12-binding domain maps to 1–144 (MSAELASRGR…ATRLSDHPDY (144 aa)). Residues asparagine 18, serine 72, tyrosine 74, valine 75, histidine 103, glycine 126, and glutamate 127 each contribute to the cob(II)alamin site. The Radical SAM core domain maps to 192–417 (RGLRFYALWE…RMYVERPGTP (226 aa)). Residues cysteine 206 and cysteine 210 each contribute to the [4Fe-4S] cluster site. Phenylalanine 212 contributes to the 5'-deoxyadenosine binding site. Cysteine 213 is a binding site for [4Fe-4S] cluster. Residues aspartate 214 and cysteine 249 each contribute to the cob(II)alamin site. 5'-deoxyadenosine contacts are provided by glutamine 312, glutamate 349, and glycine 384.

Belongs to the methyltransferase superfamily. The cofactor is [4Fe-4S] cluster. Cob(II)alamin is required as a cofactor.

The protein operates within antibiotic biosynthesis. Methyltransferase involved in the biosynthesis of the beta-lactam carbapenem antibiotic asparenomycin. Catalyzes three consecutive S-adenosyl-L-methionine-dependent methylations to build out the C6-isopropyl side chain in a stereocontrolled manner. The protein is Cobalamin-dependent radical SAM methyltransferase TokK of Streptomyces tokunonensis.